The sequence spans 449 residues: Probable cysteine proteinase 224L (449 aa).

Residues Cys-99, His-292, and Asn-322 contribute to the active site. The chain crosses the membrane as a helical span at residues 429–449 (DTQIVFIFFLSVVILFIFIIL).

It belongs to the peptidase C1 family.

It localises to the membrane. Functionally, probable cysteine protease. The protein is Probable cysteine proteinase 224L of Acheta domesticus (House cricket).